The primary structure comprises 392 residues: Acetyl-CoA acetyltransferase (392 aa).

Cys-85 functions as the Acyl-thioester intermediate in the catalytic mechanism. Residues Cys-206, Ser-207, Val-209, and Lys-332 each coordinate CoA. The active-site Proton acceptor is the His-336.

The protein belongs to the thiolase-like superfamily. Thiolase family. Interacts with HMG-CoA synthase (HMGCS) that catalyzes the second step in the pathway and with a DUF35 protein. The acetoacetyl-CoA thiolase/HMG-CoA synthase complex channels the intermediate via a fused CoA-binding site, which allows for efficient coupling of the endergonic thiolase reaction with the exergonic HMGCS reaction.

The catalysed reaction is 2 acetyl-CoA = acetoacetyl-CoA + CoA. It participates in metabolic intermediate biosynthesis; (R)-mevalonate biosynthesis; (R)-mevalonate from acetyl-CoA: step 1/3. Its function is as follows. Catalyzes the condensation of two acetyl-coA molecules into acetoacetyl-CoA. Functions in the mevalonate (MVA) pathway leading to isopentenyl diphosphate (IPP), a key precursor for the biosynthesis of isoprenoid compounds that are building blocks of archaeal membrane lipids. The polypeptide is Acetyl-CoA acetyltransferase (Methanocaldococcus jannaschii (strain ATCC 43067 / DSM 2661 / JAL-1 / JCM 10045 / NBRC 100440) (Methanococcus jannaschii)).